The primary structure comprises 145 residues: Deoxyuridine 5'-triphosphate nucleotidohydrolase (145 aa).

Substrate contacts are provided by residues 64–66 (RSG), Asn77, 81–83 (TID), and Met91.

This sequence belongs to the dUTPase family. Requires Mg(2+) as cofactor.

The enzyme catalyses dUTP + H2O = dUMP + diphosphate + H(+). The protein operates within pyrimidine metabolism; dUMP biosynthesis; dUMP from dCTP (dUTP route): step 2/2. This enzyme is involved in nucleotide metabolism: it produces dUMP, the immediate precursor of thymidine nucleotides and it decreases the intracellular concentration of dUTP so that uracil cannot be incorporated into DNA. In Leptospira borgpetersenii serovar Hardjo-bovis (strain JB197), this protein is Deoxyuridine 5'-triphosphate nucleotidohydrolase.